A 477-amino-acid polypeptide reads, in one-letter code: Protein U33 (477 aa).

Belongs to the herpesviridae UL49 family.

The chain is Protein U33 (U33) from Homo sapiens (Human).